The primary structure comprises 79 residues: MSVKLRLARMGNKKRAFYRIVAVNSAARRDGRPLEFLGFYNPMVNPAEVKIDTAKVQKWLDQGAEPTDTVRTLLKKQAG.

This sequence belongs to the bacterial ribosomal protein bS16 family.

The chain is Small ribosomal subunit protein bS16 from Nitratidesulfovibrio vulgaris (strain DSM 19637 / Miyazaki F) (Desulfovibrio vulgaris).